A 311-amino-acid chain; its full sequence is Glycine--tRNA ligase alpha subunit (311 aa).

This sequence belongs to the class-II aminoacyl-tRNA synthetase family. Tetramer of two alpha and two beta subunits.

The protein resides in the cytoplasm. It catalyses the reaction tRNA(Gly) + glycine + ATP = glycyl-tRNA(Gly) + AMP + diphosphate. In Bradyrhizobium diazoefficiens (strain JCM 10833 / BCRC 13528 / IAM 13628 / NBRC 14792 / USDA 110), this protein is Glycine--tRNA ligase alpha subunit.